A 77-amino-acid polypeptide reads, in one-letter code: MDSIEKTPDGEEEEKDVWDTALEKGGCVEEHLRLNDCYWDTHDWRKCTEQMEEFRKCWEKRHGPLPSISDKKNKNLS.

One can recognise a CHCH domain in the interval 24–65 (KGGCVEEHLRLNDCYWDTHDWRKCTEQMEEFRKCWEKRHGPL). Short sequence motifs (cx9C motif) lie at residues 27–37 (CVEEHLRLNDC) and 47–57 (CTEQMEEFRKC). 2 cysteine pairs are disulfide-bonded: Cys27/Cys57 and Cys37/Cys47.

The protein localises to the cytoplasm. The protein resides in the nucleus. The polypeptide is Coiled-coil-helix-coiled-coil-helix domain-containing protein C550.01c (Schizosaccharomyces pombe (strain 972 / ATCC 24843) (Fission yeast)).